Consider the following 570-residue polypeptide: Glycine--tRNA ligase (570 aa).

Residues R99 and E165 each coordinate substrate. ATP-binding positions include 197–199 (RNE), 207–212 (LRLREF), 324–325 (EC), and 443–446 (GIDR). 212–216 (FTQAE) lines the substrate pocket. 439–443 (EPSFG) is a substrate binding site.

It belongs to the class-II aminoacyl-tRNA synthetase family.

The protein localises to the cytoplasm. It catalyses the reaction tRNA(Gly) + glycine + ATP = glycyl-tRNA(Gly) + AMP + diphosphate. Functionally, catalyzes the attachment of glycine to tRNA(Gly). The sequence is that of Glycine--tRNA ligase from Thermococcus kodakarensis (strain ATCC BAA-918 / JCM 12380 / KOD1) (Pyrococcus kodakaraensis (strain KOD1)).